Reading from the N-terminus, the 632-residue chain is MSSQEASKMLRTYNIAWWGNNYYDVNELGHISVCPDPDVPEARVDLAKLVKAREAQGQRLPALFCFPQILQHRLRSINAAFKRARESYGYNGDYFLVYPIKVNQHRRVIESLIHSGEPLGLEAGSKAELMAVLAHAGMTRSVIVCNGYKDREYIRLALIGEKMGHKVYLVIEKMSEIAIVLEEAERLNVVPRLGVRARLASQGSGKWQSSGGEKSKFGLAATQVLQLVETLRDAGRLDSLQLLHFHLGSQMANIRDIATGVRESARFYVELHKLGVNIQCFDVGGGLGVDYEGTRSQSDCSVNYGLNEYANNIIWAIGDACEEHGLPHPMVITESGRAVTAHHTVLVSNIIGVERNEYTDPTAPAEDAPRALQNLWETWQEMHKPGTRRSLREWLHDSQMDLHDIHIGYSSGAFSLQERAWAEQLYLSMCHEVQKQLDPQNRAHRPIIDELQERMADKMYVNFSLFQSMPDAWGIDQLFPVLPLEGLDQVPERRAVLLDITCDSDGAIDHYIDGDGIATTMPMPEYDPENPPMLGFFMVGAYQEILGNMHNLFGDTEAVDVFVFPDGSVEVELSDEGDTVADMLQYVQLDPKTLLTHFRDQVKQTDLDDALQQQFLEEFEAGLYGYTYLEDE.

The residue at position 101 (Lys-101) is an N6-(pyridoxal phosphate)lysine. Residue 281 to 291 (FDVGGGLGVDY) participates in substrate binding.

It belongs to the Orn/Lys/Arg decarboxylase class-II family. SpeA subfamily. Requires Mg(2+) as cofactor. Pyridoxal 5'-phosphate is required as a cofactor.

It carries out the reaction L-arginine + H(+) = agmatine + CO2. It participates in amine and polyamine biosynthesis; agmatine biosynthesis; agmatine from L-arginine: step 1/1. In terms of biological role, catalyzes the biosynthesis of agmatine from arginine. The chain is Biosynthetic arginine decarboxylase from Salmonella dublin (strain CT_02021853).